Here is a 463-residue protein sequence, read N- to C-terminus: Cysteine--tRNA ligase (463 aa).

Cysteine 27 serves as a coordination point for Zn(2+). Residues 29–39 (MTVYDYCHLGH) carry the 'HIGH' region motif. The Zn(2+) site is built by cysteine 208, histidine 233, and glutamate 237. A 'KMSKS' region motif is present at residues 265–269 (KMSKS). Lysine 268 serves as a coordination point for ATP.

This sequence belongs to the class-I aminoacyl-tRNA synthetase family. Monomer. The cofactor is Zn(2+).

It is found in the cytoplasm. It carries out the reaction tRNA(Cys) + L-cysteine + ATP = L-cysteinyl-tRNA(Cys) + AMP + diphosphate. The polypeptide is Cysteine--tRNA ligase (Marinobacter nauticus (strain ATCC 700491 / DSM 11845 / VT8) (Marinobacter aquaeolei)).